Reading from the N-terminus, the 252-residue chain is Chitooligosaccharide deacetylase (252 aa).

Mg(2+) contacts are provided by His-61 and His-125.

Belongs to the YdjC deacetylase family. ChbG subfamily. In terms of assembly, homodimer. Requires Mg(2+) as cofactor.

Its subcellular location is the cytoplasm. It carries out the reaction N,N'-diacetylchitobiose + H2O = N-acetyl-beta-D-glucosaminyl-(1-&gt;4)-D-glucosamine + acetate. The catalysed reaction is diacetylchitobiose-6'-phosphate + H2O = N'-monoacetylchitobiose-6'-phosphate + acetate. It participates in glycan degradation; chitin degradation. In terms of biological role, involved in the degradation of chitin. ChbG is essential for growth on the acetylated chitooligosaccharides chitobiose and chitotriose but is dispensable for growth on cellobiose and chitosan dimer, the deacetylated form of chitobiose. Deacetylation of chitobiose-6-P and chitotriose-6-P is necessary for both the activation of the chb promoter by the regulatory protein ChbR and the hydrolysis of phosphorylated beta-glucosides by the phospho-beta-glucosidase ChbF. Catalyzes the removal of only one acetyl group from chitobiose-6-P to yield monoacetylchitobiose-6-P, the inducer of ChbR and the substrate of ChbF. This Salmonella paratyphi C (strain RKS4594) protein is Chitooligosaccharide deacetylase.